The sequence spans 274 residues: Octanoyltransferase LipM (274 aa).

Residues G31–L245 enclose the BPL/LPL catalytic domain. C147 serves as the catalytic Acyl-thioester intermediate.

This sequence belongs to the octanoyltransferase LipM family. As to quaternary structure, monomer.

The enzyme catalyses octanoyl-[ACP] + L-lysyl-[protein] = N(6)-octanoyl-L-lysyl-[protein] + holo-[ACP] + H(+). The protein operates within protein modification; protein lipoylation via endogenous pathway; protein N(6)-(lipoyl)lysine from octanoyl-[acyl-carrier-protein]. In terms of biological role, catalyzes the transfer of endogenously produced octanoic acid from octanoyl-acyl-carrier-protein onto the lipoyl domain of GcvH, an intermediate carrier during protein lipoylation. This is Octanoyltransferase LipM from Kyrpidia tusciae (strain DSM 2912 / NBRC 15312 / T2) (Bacillus tusciae).